The following is a 238-amino-acid chain: tRNA (guanine-N(7)-)-methyltransferase (238 aa).

Positions 68, 93, 120, and 143 each coordinate S-adenosyl-L-methionine. D143 is an active-site residue. Residues K147, D179, and 216 to 219 (TKFE) contribute to the substrate site.

This sequence belongs to the class I-like SAM-binding methyltransferase superfamily. TrmB family.

The catalysed reaction is guanosine(46) in tRNA + S-adenosyl-L-methionine = N(7)-methylguanosine(46) in tRNA + S-adenosyl-L-homocysteine. It participates in tRNA modification; N(7)-methylguanine-tRNA biosynthesis. Catalyzes the formation of N(7)-methylguanine at position 46 (m7G46) in tRNA. The sequence is that of tRNA (guanine-N(7)-)-methyltransferase from Marinobacter nauticus (strain ATCC 700491 / DSM 11845 / VT8) (Marinobacter aquaeolei).